The chain runs to 587 residues: Ran GTPase-activating protein 1 (587 aa).

A2 is subject to N-acetylalanine. Residue K8 forms a Glycyl lysine isopeptide (Lys-Gly) (interchain with G-Cter in SUMO1); alternate linkage. Residue K8 forms a Glycyl lysine isopeptide (Lys-Gly) (interchain with G-Cter in SUMO2); alternate linkage. K15 participates in a covalent cross-link: Glycyl lysine isopeptide (Lys-Gly) (interchain with G-Cter in SUMO2). At S24 the chain carries Phosphoserine. LRR repeat units follow at residues 48-71 (FDSL…VIAK), 111-134 (GAQL…GFEA), 207-230 (IGTL…ALAQ), and 235-258 (NPLL…AMAE). K279 is covalently cross-linked (Glycyl lysine isopeptide (Lys-Gly) (interchain with G-Cter in SUMO2)). LRR repeat units lie at residues 292 to 319 (LPKL…AMAD) and 320 to 343 (KAEL…QLQE). Phosphoserine is present on S301. The interval 357 to 430 (LSDDEDEEEE…EPAPVLSSPP (74 aa)) is disordered. A Phosphoserine modification is found at S358. Acidic residues predominate over residues 358–397 (SDDEDEEEEEEGEEEEEEAEEEEEEDEEEEEEEEEEEEEE). The segment covering 400–410 (QRGQGEKSATP) has biased composition (polar residues). Phosphothreonine; by CDK2 is present on T409. S428 and S435 each carry phosphoserine. The residue at position 436 (T436) is a Phosphothreonine. The residue at position 442 (S442) is a Phosphoserine. A Glycyl lysine isopeptide (Lys-Gly) (interchain with G-Cter in SUMO2) cross-link involves residue K452. Positions 523-526 (LKSE) match the SUMO conjugation motif. A Glycyl lysine isopeptide (Lys-Gly) (interchain with G-Cter in SUMO1); alternate cross-link involves residue K524. K524 is covalently cross-linked (Glycyl lysine isopeptide (Lys-Gly) (interchain with G-Cter in SUMO2); alternate). Position 524 is an N6-acetyllysine; alternate (K524). Residue K586 forms a Glycyl lysine isopeptide (Lys-Gly) (interchain with G-Cter in SUMO2) linkage.

This sequence belongs to the RNA1 family. In terms of assembly, homodimer. Interacts with RAN. Forms a complex with RANBP2/NUP358, NXF1 and NXT1. Forms a tight complex in association with RANBP2/NUP358 and UBE2I/UBC9, the ubiquitin-conjugating enzyme E2. Interacts with UBE2I; the interaction conjugates SUMO1 to RANGAP1, and subsequently stabilizes interactions of sumoylated RANGAP1 with RANBP2/NUP358. The complex composed of RANBP2, SUMO1, RANGAP1 and UBE2I associates with nuclear pore complexes. Identified in a complex composed of RAN, RANBP2, sumoylated RANGAP1, UBE2I and XPO1. Identified in a complex composed of RAN, RANGAP1 and RANBP1. Interacts with TRAF6. Interacts with SUMO1 and SENP1. Interacts (when sumoylated) with MYCBP2; interaction inhibits MYCBP2 E3 ubiquitin-protein ligase activity and promotes MYCBP2 translocation to the nucleus. Phosphorylation occurs before nuclear envelope breakdown and continues throughout mitosis. Phosphorylated by the M-phase kinase cyclin B/Cdk1, in vitro. Differential timimg of dephosphorylation occurs during phases of mitosis. The phosphorylated form remains associated with RANBP2/NUP358 and the SUMO E2-conjugating enzyme, UBE2I, on nuclear pore complex (NPC) diassembly and during mitosis. Post-translationally, sumoylated. Sumoylation is necessary for targeting to the nuclear envelope (NE), and for association with mitotic spindles and kinetochores during mitosis. Also required for interaction with RANBP2 and is mediated by UBE2I. Desumoylated by HINT1. Highly expressed in brain, thymus and testis.

It localises to the cytoplasm. The protein localises to the nucleus. Its subcellular location is the nucleoplasm. It is found in the nucleus envelope. The protein resides in the chromosome. It localises to the centromere. The protein localises to the kinetochore. Its subcellular location is the cytoskeleton. It is found in the spindle. In terms of biological role, GTPase activator for RAN. Converts cytoplasmic GTP-bound RAN to GDP-bound RAN, which is essential for RAN-mediated nuclear import and export. Mediates dissociation of cargo from nuclear export complexes containing XPO1, RAN and RANBP2 after nuclear export. This chain is Ran GTPase-activating protein 1 (RANGAP1), found in Homo sapiens (Human).